The primary structure comprises 158 residues: 6,7-dimethyl-8-ribityllumazine synthase (158 aa).

5-amino-6-(D-ribitylamino)uracil contacts are provided by residues Trp-27, 58 to 60 (SFE), and 81 to 83 (VII). Residue 86–87 (GT) coordinates (2S)-2-hydroxy-3-oxobutyl phosphate. His-89 serves as the catalytic Proton donor. Phe-114 serves as a coordination point for 5-amino-6-(D-ribitylamino)uracil. Arg-128 contacts (2S)-2-hydroxy-3-oxobutyl phosphate.

This sequence belongs to the DMRL synthase family.

It carries out the reaction (2S)-2-hydroxy-3-oxobutyl phosphate + 5-amino-6-(D-ribitylamino)uracil = 6,7-dimethyl-8-(1-D-ribityl)lumazine + phosphate + 2 H2O + H(+). It participates in cofactor biosynthesis; riboflavin biosynthesis; riboflavin from 2-hydroxy-3-oxobutyl phosphate and 5-amino-6-(D-ribitylamino)uracil: step 1/2. Catalyzes the formation of 6,7-dimethyl-8-ribityllumazine by condensation of 5-amino-6-(D-ribitylamino)uracil with 3,4-dihydroxy-2-butanone 4-phosphate. This is the penultimate step in the biosynthesis of riboflavin. In Leifsonia xyli subsp. xyli (strain CTCB07), this protein is 6,7-dimethyl-8-ribityllumazine synthase.